The chain runs to 364 residues: Coproporphyrin III ferrochelatase (364 aa).

The Fe-coproporphyrin III site is built by Arg29 and Tyr118. Fe(2+) is bound by residues His169 and Glu250.

It belongs to the ferrochelatase family.

The protein localises to the cytoplasm. It carries out the reaction Fe-coproporphyrin III + 2 H(+) = coproporphyrin III + Fe(2+). It participates in porphyrin-containing compound metabolism; protoheme biosynthesis. Its function is as follows. Involved in coproporphyrin-dependent heme b biosynthesis. Catalyzes the insertion of ferrous iron into coproporphyrin III to form Fe-coproporphyrin III. The chain is Coproporphyrin III ferrochelatase from Streptococcus pneumoniae (strain 70585).